A 50-amino-acid polypeptide reads, in one-letter code: Large ribosomal subunit protein bL33B (50 aa).

This sequence belongs to the bacterial ribosomal protein bL33 family.

In Streptococcus pneumoniae (strain ATCC BAA-255 / R6), this protein is Large ribosomal subunit protein bL33B.